A 184-amino-acid polypeptide reads, in one-letter code: MKNVTDSFVSLGRWPSAGSFGLNTDILATNPINLSVVLGVLIFFGKGVLNDLLDNRKQRILNTIRNSEELRGGAIEQLEKARARLRKVKTEAARFRVNQYSEAEREKLNLINLTYKSLEDFENYKNDSIRFEQQRAIHQVRQRVFQQALRGALETLNSCLNKELHLRTISANIRLFRSMKELTN.

A helical membrane pass occupies residues 27 to 49; sequence LATNPINLSVVLGVLIFFGKGVL.

This sequence belongs to the ATPase B chain family. In terms of assembly, F-type ATPases have 2 components, F(1) - the catalytic core - and F(0) - the membrane proton channel. F(1) has five subunits: alpha(3), beta(3), gamma(1), delta(1), epsilon(1). F(0) has four main subunits: a(1), b(1), b'(1) and c(10-14). The alpha and beta chains form an alternating ring which encloses part of the gamma chain. F(1) is attached to F(0) by a central stalk formed by the gamma and epsilon chains, while a peripheral stalk is formed by the delta, b and b' chains.

The protein resides in the plastid. It is found in the chloroplast thylakoid membrane. In terms of biological role, f(1)F(0) ATP synthase produces ATP from ADP in the presence of a proton or sodium gradient. F-type ATPases consist of two structural domains, F(1) containing the extramembraneous catalytic core and F(0) containing the membrane proton channel, linked together by a central stalk and a peripheral stalk. During catalysis, ATP synthesis in the catalytic domain of F(1) is coupled via a rotary mechanism of the central stalk subunits to proton translocation. Component of the F(0) channel, it forms part of the peripheral stalk, linking F(1) to F(0). This chain is ATP synthase subunit b, chloroplastic, found in Pelargonium hortorum (Common geranium).